A 546-amino-acid polypeptide reads, in one-letter code: Low-affinity methionine permease (546 aa).

Over 1-70 (MEPLLFNSGK…QGRHLGVFST (70 aa)) the chain is Extracellular. The helical transmembrane segment at 71-91 (VVLFVSRIMGSGIFAVPSVIL) threads the bilayer. Over 92-98 (LNTGGNK) the chain is Cytoplasmic. The helical transmembrane segment at 99–119 (LIYFAIWVFSAAIAFAGLYLF) threads the bilayer. Residues 120–148 (LEFGSWIPKSGGRKNFLERSFERPRLLIS) lie on the Extracellular side of the membrane. Residues 149 to 169 (VVFSCYSVLTGYALTGSIVFG) form a helical membrane-spanning segment. Residues 170 to 188 (KYVLSAFGVTDDSWSKYVS) are Cytoplasmic-facing. Residues 189 to 209 (ISFIIFAVLIHGVSVRHGVFI) traverse the membrane as a helical segment. Residues 210-213 (QNAL) lie on the Extracellular side of the membrane. A helical transmembrane segment spans residues 214-234 (GGLKLIMIVLMCFAGLYTLFF). The Cytoplasmic segment spans residues 235 to 254 (YKSTGQVAWDLPVTQVEKDS). The chain crosses the membrane as a helical span at residues 255–275 (LLSVSSIATAFISSFFCFSGW). The Extracellular portion of the chain corresponds to 276 to 297 (DTVHTVTSEIKNPVKTLKVSGP). Residues 298–318 (LSLIICFVCYTMMNVAYLKVL) form a helical membrane-spanning segment. Position 319 (T319) is a topological domain, cytoplasmic. Residues 320–340 (YEEIVSAGPLVGSVLFTKLFG) traverse the membrane as a helical segment. The Extracellular portion of the chain corresponds to 341-346 (PRVGGK). Residues 347–367 (FIAFSIAISAASNILVVIYSI) form a helical membrane-spanning segment. The Cytoplasmic portion of the chain corresponds to 368–393 (SRVNQEIFKEGYLPFSIHMSKNWPFD). Residues 394–414 (APLPSISLCGFITIAWILILP) traverse the membrane as a helical segment. The Extracellular portion of the chain corresponds to 415–423 (KEGESFNYL). Residues 424–444 (VSMDGYGNQFFLLLVAIGLFI) form a helical membrane-spanning segment. At 445 to 459 (WRFKHKNEVPEIRAS) the chain is on the cytoplasmic side. Residues 460-480 (TFGVLAIITLSLYMLMAPFFA) form a helical membrane-spanning segment. At 481–494 (DPSLNRVGFLPPYQ) the chain is on the extracellular side. The helical transmembrane segment at 495 to 515 (IMSLLVIVACFFFWLVKFVLL) threads the bilayer. At 516 to 546 (PKFFHYKLLPKITYLHDGLIVTEWVKKPCLC) the chain is on the cytoplasmic side.

To yeast high affinity methionine permease (MUP1).

The protein resides in the membrane. Very low affinity permease for methionine. This is Low-affinity methionine permease (MUP3) from Saccharomyces cerevisiae (strain ATCC 204508 / S288c) (Baker's yeast).